The primary structure comprises 62 residues: Protein UL148D (62 aa).

The helical transmembrane segment at 30 to 50 (WWISVAIVIFIGVCLVALMYF) threads the bilayer.

The protein localises to the host membrane. In Human cytomegalovirus (strain Merlin) (HHV-5), this protein is Protein UL148D (UL148D).